The primary structure comprises 53 residues: uncharacterized protein (53 aa).

Residues 4 to 24 traverse the membrane as a helical segment; it reads FILLIVGFIYGAGGVLLYSVY.

It localises to the host membrane. This is an uncharacterized protein from Acidianus bottle-shaped virus (isolate Italy/Pozzuoli) (ABV).